Reading from the N-terminus, the 155-residue chain is Nodulin-related protein 2 (155 aa).

At methionine 1 the chain carries N-acetylmethionine. Disordered stretches follow at residues 1–37 (MNFI…PATN) and 85–155 (DEKS…GFLK). The span at 95–106 (DKAEKYLNDYES) shows a compositional bias: basic and acidic residues. Low complexity predominate over residues 120–130 (SQAEPASQPEP).

As to quaternary structure, interacts with DEK3.

In terms of biological role, may be a negative regulator of the ABA signaling/synthesis pathway. This chain is Nodulin-related protein 2, found in Arabidopsis thaliana (Mouse-ear cress).